The following is a 418-amino-acid chain: D-amino acid dehydrogenase (418 aa).

FAD is bound at residue 3–17 (VLILGSGVVGVATAY).

The protein belongs to the DadA oxidoreductase family. Requires FAD as cofactor.

It catalyses the reaction a D-alpha-amino acid + A + H2O = a 2-oxocarboxylate + AH2 + NH4(+). It participates in amino-acid degradation; D-alanine degradation; NH(3) and pyruvate from D-alanine: step 1/1. Functionally, oxidative deamination of D-amino acids. The polypeptide is D-amino acid dehydrogenase (Granulibacter bethesdensis (strain ATCC BAA-1260 / CGDNIH1)).